The sequence spans 244 residues: Uridylate kinase (244 aa).

An ATP-binding site is contributed by 15–18 (KLSG). Positions 23 to 28 (GSEGFG) are involved in allosteric activation by GTP. Glycine 57 provides a ligand contact to UMP. Residues glycine 58 and arginine 62 each coordinate ATP. Residues aspartate 77 and 138–145 (TGNPFFTT) contribute to the UMP site. Residues threonine 165, phenylalanine 171, and aspartate 174 each coordinate ATP.

Belongs to the UMP kinase family. As to quaternary structure, homohexamer.

The protein localises to the cytoplasm. It catalyses the reaction UMP + ATP = UDP + ADP. Its pathway is pyrimidine metabolism; CTP biosynthesis via de novo pathway; UDP from UMP (UMPK route): step 1/1. Its activity is regulated as follows. Allosterically activated by GTP. Inhibited by UTP. Its function is as follows. Catalyzes the reversible phosphorylation of UMP to UDP. The polypeptide is Uridylate kinase (Aeromonas salmonicida (strain A449)).